We begin with the raw amino-acid sequence, 257 residues long: Type III pantothenate kinase (257 aa).

11–18 (DSGNTAIK) lines the ATP pocket. Residues Y96 and 103–106 (GCDR) contribute to the substrate site. D105 acts as the Proton acceptor in catalysis. Residue D125 coordinates K(+). T128 lines the ATP pocket. T179 contacts substrate.

Belongs to the type III pantothenate kinase family. In terms of assembly, homodimer. It depends on NH4(+) as a cofactor. K(+) is required as a cofactor.

It is found in the cytoplasm. It catalyses the reaction (R)-pantothenate + ATP = (R)-4'-phosphopantothenate + ADP + H(+). It participates in cofactor biosynthesis; coenzyme A biosynthesis; CoA from (R)-pantothenate: step 1/5. Functionally, catalyzes the phosphorylation of pantothenate (Pan), the first step in CoA biosynthesis. The protein is Type III pantothenate kinase of Nitrosomonas eutropha (strain DSM 101675 / C91 / Nm57).